We begin with the raw amino-acid sequence, 490 residues long: Aspartyl/glutamyl-tRNA(Asn/Gln) amidotransferase subunit B (490 aa).

Belongs to the GatB/GatE family. GatB subfamily. In terms of assembly, heterotrimer of A, B and C subunits.

It catalyses the reaction L-glutamyl-tRNA(Gln) + L-glutamine + ATP + H2O = L-glutaminyl-tRNA(Gln) + L-glutamate + ADP + phosphate + H(+). The enzyme catalyses L-aspartyl-tRNA(Asn) + L-glutamine + ATP + H2O = L-asparaginyl-tRNA(Asn) + L-glutamate + ADP + phosphate + 2 H(+). Functionally, allows the formation of correctly charged Asn-tRNA(Asn) or Gln-tRNA(Gln) through the transamidation of misacylated Asp-tRNA(Asn) or Glu-tRNA(Gln) in organisms which lack either or both of asparaginyl-tRNA or glutaminyl-tRNA synthetases. The reaction takes place in the presence of glutamine and ATP through an activated phospho-Asp-tRNA(Asn) or phospho-Glu-tRNA(Gln). The protein is Aspartyl/glutamyl-tRNA(Asn/Gln) amidotransferase subunit B of Burkholderia mallei (strain NCTC 10247).